The following is a 78-amino-acid chain: NAD(P)H-quinone oxidoreductase subunit O (78 aa).

Belongs to the complex I NdhO subunit family. As to quaternary structure, NDH-1 can be composed of about 15 different subunits; different subcomplexes with different compositions have been identified which probably have different functions.

It localises to the cellular thylakoid membrane. It catalyses the reaction a plastoquinone + NADH + (n+1) H(+)(in) = a plastoquinol + NAD(+) + n H(+)(out). The catalysed reaction is a plastoquinone + NADPH + (n+1) H(+)(in) = a plastoquinol + NADP(+) + n H(+)(out). NDH-1 shuttles electrons from an unknown electron donor, via FMN and iron-sulfur (Fe-S) centers, to quinones in the respiratory and/or the photosynthetic chain. The immediate electron acceptor for the enzyme in this species is believed to be plastoquinone. Couples the redox reaction to proton translocation, and thus conserves the redox energy in a proton gradient. Cyanobacterial NDH-1 also plays a role in inorganic carbon-concentration. The protein is NAD(P)H-quinone oxidoreductase subunit O of Prochlorococcus marinus (strain MIT 9312).